A 309-amino-acid chain; its full sequence is Elongation factor Ts (309 aa).

The involved in Mg(2+) ion dislocation from EF-Tu stretch occupies residues 82–85 (TDFV).

The protein belongs to the EF-Ts family.

It localises to the cytoplasm. Its function is as follows. Associates with the EF-Tu.GDP complex and induces the exchange of GDP to GTP. It remains bound to the aminoacyl-tRNA.EF-Tu.GTP complex up to the GTP hydrolysis stage on the ribosome. The polypeptide is Elongation factor Ts (Rickettsia massiliae (strain Mtu5)).